A 368-amino-acid chain; its full sequence is MQLDKYTAKKIVKRAMKIIHHSVNVMDHDGVIIASGNSTRLNQRHTGAVLALRENRVVEIDQALAQKWNFEAQPGINLPIHYLGKNIGVVGISGEPTQVKQYAELVKMTAELIVEQQALLEQESWHRRYKEEFILQLLHCNLNWKEMEQQAKFFSFDLNKSRVVVLIKLLNPALDNLQNLINYLEQSEFAQDVAILSLDQVVVLKTWQNSTVLSAQMKTLLPADYSKQDYKIAVGACLNLPLFEQLPLSFQSAQSTLSYGLKHHPRKGIYVFDEHRLPVLLAGLSHSWQGNELIKPLSPLFSEENAILYKTLQQYFLSNCDLYLTAEKLFVHPNTLRYRLNKIEQITGLFFNKIDDKLTLYLGTLLEH.

It belongs to the CdaR family.

This is an uncharacterized protein from Haemophilus influenzae (strain ATCC 51907 / DSM 11121 / KW20 / Rd).